The following is a 141-amino-acid chain: Large ribosomal subunit protein uL11 (141 aa).

The protein belongs to the universal ribosomal protein uL11 family. As to quaternary structure, part of the ribosomal stalk of the 50S ribosomal subunit. Interacts with L10 and the large rRNA to form the base of the stalk. L10 forms an elongated spine to which L12 dimers bind in a sequential fashion forming a multimeric L10(L12)X complex. In terms of processing, one or more lysine residues are methylated.

Forms part of the ribosomal stalk which helps the ribosome interact with GTP-bound translation factors. The protein is Large ribosomal subunit protein uL11 of Parasynechococcus marenigrum (strain WH8102).